Here is a 340-residue protein sequence, read N- to C-terminus: Glycerol-3-phosphate dehydrogenase [NAD(P)+] (340 aa).

NADPH-binding residues include Ser-13, Tyr-14, and Lys-108. Positions 108, 137, and 139 each coordinate sn-glycerol 3-phosphate. NADPH is bound at residue Ala-141. Sn-glycerol 3-phosphate-binding residues include Lys-193, Asp-246, Ser-256, Arg-257, and Asn-258. Lys-193 acts as the Proton acceptor in catalysis. Arg-257 contacts NADPH. Ile-281 and Glu-283 together coordinate NADPH.

Belongs to the NAD-dependent glycerol-3-phosphate dehydrogenase family.

Its subcellular location is the cytoplasm. The catalysed reaction is sn-glycerol 3-phosphate + NAD(+) = dihydroxyacetone phosphate + NADH + H(+). The enzyme catalyses sn-glycerol 3-phosphate + NADP(+) = dihydroxyacetone phosphate + NADPH + H(+). It functions in the pathway membrane lipid metabolism; glycerophospholipid metabolism. Catalyzes the reduction of the glycolytic intermediate dihydroxyacetone phosphate (DHAP) to sn-glycerol 3-phosphate (G3P), the key precursor for phospholipid synthesis. The protein is Glycerol-3-phosphate dehydrogenase [NAD(P)+] of Bartonella henselae (strain ATCC 49882 / DSM 28221 / CCUG 30454 / Houston 1) (Rochalimaea henselae).